Here is a 394-residue protein sequence, read N- to C-terminus: Suppressor APC domain-containing protein 2 (394 aa).

Disordered stretches follow at residues 1–23, 95–125, and 150–188; these read MAGA…STEG, LLSA…RLVF, and GPSA…SSSA. The span at 177-188 shows a compositional bias: polar residues; the sequence is SQSAALEPSSSA. Threonine 219 bears the Phosphothreonine mark. The stretch at 227–277 forms a coiled coil; the sequence is GLLKQMKELEQEKEVLLQGLEMMARGRDWYQQQLQRVQERQRRLGQSRASA. Serine 284 carries the post-translational modification Phosphoserine. Positions 336-384 form a coiled coil; sequence QQQTILMLKEQNRLLTQEVTEKSERITQLEQEKSALIKQLFEARALSQQ.

As to quaternary structure, interacts with a spindle orientation complex at least composed of GNAI1, GPSM2 and NUMA1. Interacts with GPSM2 (via TPR motifs); this interaction is required to prevent GPSM2 anchoring at the mitotic apical cortex and is inhibited in presence of NUMA1 in a dose dependent manner. Interacts with PARD3. In terms of tissue distribution, expressed in 5-month-old fetal tissues, including stomach, intestine, colon, liver, brain, lung, heart, spleen and kidney. Undetectable in non-cancerous adult tissues. Expressed in many primary gastric carcinoma, but almost not in adjacent normal mucosa. Expressed preferentially in M and G1 phases, compared to S and G2 phases. Expression is up-regulated in hepatocellular carcinoma (HCC) and colorectal cancer (CRC) tissues (at protein level).

The protein resides in the cytoplasm. It is found in the nucleus. The protein localises to the cell cortex. It localises to the apical cell membrane. Its subcellular location is the cell junction. The protein resides in the tight junction. Its function is as follows. Plays a role in planar mitotic spindle orientation in retinal progenitor cells (RPCs) and promotes the production of symmetric terminal divisions. Negatively regulates the mitotic apical cortex localization of GPSM2. Involved also in positive regulation of cell proliferation and tumor cell growth. The polypeptide is Suppressor APC domain-containing protein 2 (Homo sapiens (Human)).